Consider the following 259-residue polypeptide: Thrombin-like enzyme gyroxin B1.7 (259 aa).

The signal sequence occupies residues 1–18 (MVLIRVLANLLILQLSYA). A propeptide spanning residues 19–259 (QKSSELVIGG…AGNTAVTCPP (241 aa)) is cleaved from the precursor. Positions 25 to 250 (VIGGDECNIN…DTEWIQSIIA (226 aa)) constitute a Peptidase S1 domain. Intrachain disulfides connect Cys-31–Cys-162, Cys-49–Cys-65, Cys-141–Cys-211, Cys-173–Cys-190, and Cys-201–Cys-226. The active-site Charge relay system is the His-64. A glycan (N-linked (GlcNAc...) asparagine) is linked at Asn-102. Asp-109 functions as the Charge relay system in the catalytic mechanism. Residue Ser-205 is the Charge relay system of the active site.

Belongs to the peptidase S1 family. Snake venom subfamily. In terms of assembly, monomer. In terms of tissue distribution, expressed by the venom gland.

Its subcellular location is the secreted. Functionally, thrombin-like snake venom serine protease. Displays a specificity similar to trypsin. Releases only fibrinopeptide A in the conversion of fibrinogen to fibrin. Shows coagulant, esterase and amidase activities. Reversibly increases the permeability of the blood brain barrier (BBB) in mice. Induces the barrel rotation syndrome in mice, which is manifested by gyroxin-like, rapid rolling motions. This syndrome may be due to its effect on BBB permeability, and certainly also to other actions affecting endogenous substrates present in the endothelium, nervous tissues or blood. The chain is Thrombin-like enzyme gyroxin B1.7 from Crotalus durissus terrificus (South American rattlesnake).